We begin with the raw amino-acid sequence, 675 residues long: Zinc finger CCCH domain-containing protein 65 (675 aa).

The interval 294–320 is disordered; sequence TFSNEAKMDPGTSIKKRSAPSKDAKAR. Residues 307-320 are compositionally biased toward basic residues; it reads IKKRSAPSKDAKAR. Residues 314–342 adopt a coiled-coil conformation; it reads SKDAKARKRAKARIKRAQERIALGVKKLK. C3H1-type zinc fingers lie at residues 350–377, 384–406, and 409–432; these read PKPI…HDTI, PCCY…HDLS, and PCNN…HKGT. Disordered regions lie at residues 487–572 and 586–612; these read LKPS…LPLG and EQKT…SHIQ. Over residues 490–504 the composition is skewed to low complexity; sequence SSHSNQRNSSDASSS. Residues 543-567 are compositionally biased toward polar residues; sequence KASSASKPNTDNSDSQTLKQSQQGS. Residues 586–595 are compositionally biased toward basic and acidic residues; sequence EQKTLNREPQ. The segment covering 597–612 has biased composition (polar residues); that stretch reads PASSKNLKTTPSSHIQ.

In terms of biological role, possesses RNA-binding and ribonuclease activities in vitro. The sequence is that of Zinc finger CCCH domain-containing protein 65 (EMB1789) from Arabidopsis thaliana (Mouse-ear cress).